Here is a 385-residue protein sequence, read N- to C-terminus: Nod factor hydrolase protein 1 (385 aa).

The signal sequence occupies residues 1-21 (MANFLKLKQFLTLVLILLALA). Positions 36-385 (RVKGIYWIEN…TASKAWRPES (350 aa)) constitute a GH18 domain. N-linked (GlcNAc...) asparagine glycosylation is found at Asn115 and Asn134. Catalysis depends on Glu153, which acts as the Proton donor. Asn233 and Asn247 each carry an N-linked (GlcNAc...) asparagine glycan.

It belongs to the glycosyl hydrolase 18 family. Chitinase class V subfamily.

In terms of biological role, symbiotic enzyme that hydrolytically inactivates Nod factors (NFs) with a C16:2 acyl chain produced by the microsymbiont Sinorhizobium meliloti. NFs are lipo-chitooligosaccharide signaling molecules produced by nitrogen-fixing rhizobia to initiate nodulation (symbiosis) on the roots of legumes. Controls NF hydrolysis at the stage of root hair infection. Involved in the regulation of growth and branching of mature nodules. Modulates NF levels and signaling to complete transition of infected nodules to functional nitrogen-fixing organs. Lacks chitinase activity in vitro toward glycol chitin, carboxymethyl-chitin, colloidal chitin, and the chitin oligosaccharides (N-acetylglucosamine) (GlcNAc)6 and (GlcNAc)5. This chain is Nod factor hydrolase protein 1, found in Medicago truncatula (Barrel medic).